Reading from the N-terminus, the 818-residue chain is SIT4-associating protein SAP4 (818 aa).

Disordered regions lie at residues 33 to 60 (ETSS…RDRS) and 499 to 526 (TSNT…KNIK). The span at 509–518 (NNDSNDSNDN) shows a compositional bias: low complexity.

It belongs to the SAPS family. Hyperphosphorylated in the absence of SIT4.

In terms of biological role, associates with the SIT4 phosphatase in a cell cycle dependent manner. May be directly or indirectly involved in SIT4-dependent functions in budding and in normal G1 cyclin expression. The polypeptide is SIT4-associating protein SAP4 (SAP4) (Saccharomyces cerevisiae (strain ATCC 204508 / S288c) (Baker's yeast)).